Consider the following 340-residue polypeptide: Aspartate-semialdehyde dehydrogenase (340 aa).

Residues 11-14 (TGEV) and 39-40 (RS) each bind NADP(+). Residue Arg100 coordinates phosphate. Cys131 (acyl-thioester intermediate) is an active-site residue. Gln158 lines the substrate pocket. 161–162 (SG) lines the NADP(+) pocket. Lys216 is a phosphate binding site. Position 238 (Arg238) interacts with substrate. Residue His245 is the Proton acceptor of the active site. Position 318 (Asn318) interacts with NADP(+).

This sequence belongs to the aspartate-semialdehyde dehydrogenase family. In terms of assembly, homodimer.

The enzyme catalyses L-aspartate 4-semialdehyde + phosphate + NADP(+) = 4-phospho-L-aspartate + NADPH + H(+). Its pathway is amino-acid biosynthesis; L-lysine biosynthesis via DAP pathway; (S)-tetrahydrodipicolinate from L-aspartate: step 2/4. It participates in amino-acid biosynthesis; L-methionine biosynthesis via de novo pathway; L-homoserine from L-aspartate: step 2/3. The protein operates within amino-acid biosynthesis; L-threonine biosynthesis; L-threonine from L-aspartate: step 2/5. Catalyzes the NADPH-dependent formation of L-aspartate-semialdehyde (L-ASA) by the reductive dephosphorylation of L-aspartyl-4-phosphate. The chain is Aspartate-semialdehyde dehydrogenase from Aquifex aeolicus (strain VF5).